Consider the following 500-residue polypeptide: NAD(P)H-quinone oxidoreductase chain 4, chloroplastic (500 aa).

Transmembrane regions (helical) follow at residues Phe-4 to Leu-24, Tyr-35 to Phe-55, Ile-87 to Ile-107, Leu-113 to Ser-130, Leu-134 to Met-154, Phe-167 to Leu-187, Val-208 to Ile-228, His-242 to Ile-262, Ala-272 to Ala-292, Ile-305 to Asp-325, Gly-330 to Gly-350, Leu-386 to Thr-406, Leu-411 to Ile-431, and Leu-462 to Val-482.

Belongs to the complex I subunit 4 family.

It is found in the plastid. Its subcellular location is the chloroplast thylakoid membrane. The catalysed reaction is a plastoquinone + NADH + (n+1) H(+)(in) = a plastoquinol + NAD(+) + n H(+)(out). The enzyme catalyses a plastoquinone + NADPH + (n+1) H(+)(in) = a plastoquinol + NADP(+) + n H(+)(out). In Nicotiana tomentosiformis (Tobacco), this protein is NAD(P)H-quinone oxidoreductase chain 4, chloroplastic.